A 377-amino-acid chain; its full sequence is Nitric oxide reductase FlRd-NAD(+) reductase (377 aa).

This sequence belongs to the FAD-dependent oxidoreductase family. It depends on FAD as a cofactor.

It is found in the cytoplasm. The enzyme catalyses 2 reduced [nitric oxide reductase rubredoxin domain] + NAD(+) + H(+) = 2 oxidized [nitric oxide reductase rubredoxin domain] + NADH. The protein operates within nitrogen metabolism; nitric oxide reduction. Its function is as follows. One of at least two accessory proteins for anaerobic nitric oxide (NO) reductase. Reduces the rubredoxin moiety of NO reductase. This is Nitric oxide reductase FlRd-NAD(+) reductase from Salmonella paratyphi B (strain ATCC BAA-1250 / SPB7).